The chain runs to 1358 residues: Phosphoribosylformylglycinamidine synthase (1358 aa).

N-acetylthreonine is present on T2. The interval 339-363 (AVSPFPGAATGSGGEIRDEGATGRG) is disordered. ATP is bound by residues 345-356 (GAATGSGGEIRD), 424-426 (NGY), and A719. Mg(2+) contacts are provided by D720, E762, N766, and D930. S932 serves as a coordination point for ATP. The Glutamine amidotransferase type-1 domain occupies 1093-1358 (VAILREQGVN…LFRSARRWVG (266 aa)). The Nucleophile role is filled by C1187. Residues H1319 and E1321 contribute to the active site.

The protein in the N-terminal section; belongs to the FGAMS family.

It is found in the cytoplasm. It catalyses the reaction N(2)-formyl-N(1)-(5-phospho-beta-D-ribosyl)glycinamide + L-glutamine + ATP + H2O = 2-formamido-N(1)-(5-O-phospho-beta-D-ribosyl)acetamidine + L-glutamate + ADP + phosphate + H(+). The protein operates within purine metabolism; IMP biosynthesis via de novo pathway; 5-amino-1-(5-phospho-D-ribosyl)imidazole from N(2)-formyl-N(1)-(5-phospho-D-ribosyl)glycinamide: step 1/2. Functionally, phosphoribosylformylglycinamidine synthase involved in the purines biosynthetic pathway. Catalyzes the ATP-dependent conversion of formylglycinamide ribonucleotide (FGAR) and glutamine to yield formylglycinamidine ribonucleotide (FGAM) and glutamate. The polypeptide is Phosphoribosylformylglycinamidine synthase (ADE6) (Saccharomyces cerevisiae (strain ATCC 204508 / S288c) (Baker's yeast)).